The following is a 413-amino-acid chain: Unsaturated 3S-rhamnoglycuronyl hydrolase (413 aa).

An N-terminal signal peptide occupies residues 1 to 21; that stretch reads MNHTKLKLSAVALTLALGLSA. Cys-22 carries N-palmitoyl cysteine lipidation. Cys-22 is lipidated: S-diacylglycerol cysteine. Asp-203 acts as the Proton donor in catalysis.

It belongs to the glycosyl hydrolase 105 family.

The protein localises to the cell membrane. Functionally, glucuronyl hydrolase involved in ulvan degradation. Ulvan is the main polysaccharide component of the Ulvales (green seaweed) cell wall. It is composed of disaccharide building blocks comprising 3-sulfated rhamnose (Rha3S) linked to D-glucuronic acid (GlcA), L-iduronic acid (IduA), or D-xylose (Xyl). Unsaturated 3S-rhamnoglycuronyl hydrolase works together with ulvan lyases to fully degrade the ulvan polymer, catalyzing specifically the cleavage of the unsaturated 4-deoxy-L-threo-hex-4-enopyranosiduronic acid (deltaUA) of the deltaUA-oligosaccharides deltaUA-Rha3S, deltaUA-Rha3S-IduA-Rha3S and deltaUA-Rha3S-Xyl-Rha3S, the end products of the ulvan lyase reaction. The sequence is that of Unsaturated 3S-rhamnoglycuronyl hydrolase from Alteromonas sp. (strain LOR).